Here is a 509-residue protein sequence, read N- to C-terminus: ATP synthase subunit beta (509 aa).

G167–T174 lines the ATP pocket. A disordered region spans residues E476–A509. Over residues S496–A509 the composition is skewed to basic and acidic residues.

It belongs to the ATPase alpha/beta chains family. In terms of assembly, F-type ATPases have 2 components, CF(1) - the catalytic core - and CF(0) - the membrane proton channel. CF(1) has five subunits: alpha(3), beta(3), gamma(1), delta(1), epsilon(1). CF(0) has three main subunits: a(1), b(2) and c(9-12). The alpha and beta chains form an alternating ring which encloses part of the gamma chain. CF(1) is attached to CF(0) by a central stalk formed by the gamma and epsilon chains, while a peripheral stalk is formed by the delta and b chains.

Its subcellular location is the cell membrane. The enzyme catalyses ATP + H2O + 4 H(+)(in) = ADP + phosphate + 5 H(+)(out). Produces ATP from ADP in the presence of a proton gradient across the membrane. The catalytic sites are hosted primarily by the beta subunits. The chain is ATP synthase subunit beta from Mycobacterium sp. (strain KMS).